The following is a 536-amino-acid chain: MFS-type efflux pump MFS1 (536 aa).

The next 3 membrane-spanning stretches (helical) occupy residues 30-50, 80-100, and 102-122; these read VTGLKLAVIVTGLCLSVLLVA, YLLTICAFQLIFGKIYTFFPV, and WVFLIAITIFEIGSAICGAAP. Residue N123 is glycosylated (N-linked (GlcNAc...) asparagine). A run of 3 helical transmembrane segments spans residues 133 to 153, 163 to 183, and 191 to 211; these read VAGIGSAGIFSGALIIIAYSI, GAIGGMYGIASVAGPLMGGAF, and WCFYINLPIGAVTILSILIFL. N221 carries N-linked (GlcNAc...) asparagine glycosylation. 8 helical membrane passes run 234-254, 264-284, 306-326, 342-362, 366-386, 400-420, 426-446, and 503-523; these read IGTAFFMPSIICLLLALQWGG, IIALFVVFAVLISGFIYFQIR, FFLFTIGSAFFIMVYYLPIWF, IPMVLSLVVLSIASGITVTAI, APLYYVSTVLTSIGAGLLTTF, IIFGAGVGTGLQLSIIAAQAV, VAVGTVIMMFCQTLGGALFVS, and TWYVATALAALSVIGSVGMEW.

Belongs to the major facilitator superfamily. TCR/Tet family.

Its subcellular location is the cell membrane. MFS-type efflux pump involved in the modulation susceptibility to azoles, including fluconazole, itraconazole, miconazole and voriconazole. Also confers increased resistance chloramphenicol and thiamphenicol, suggesting that it acts as a pleiotropic drug transporter with a broad substrate spectrum. Finally, increases the tolerance to cycloheximide when expressed in S.cerevisiae, but not in dermatophyte species. The polypeptide is MFS-type efflux pump MFS1 (Arthroderma benhamiae (strain ATCC MYA-4681 / CBS 112371) (Trichophyton mentagrophytes)).